Reading from the N-terminus, the 205-residue chain is MAKIKDEWGEFLVRLARRAIEEYLKTGKEIEPPKDTPKELWEKMGVFVTLNRHNVPPQTALRGCIGFPLPIYPLVKATIKAAIYSAVDDPRFPPVKLEEMDNIIVEVSVLTPPELIEGPPEERPKKIKVGRDGLIVEKGIYSGLLLPQVPIEWGWDEEEFLAETCWKAGLPPDCWLDEDTKVYRFTAEIFEEEYPRGPVRRKSLV.

The region spanning 7–201 (EWGEFLVRLA…EEYPRGPVRR (195 aa)) is the AMMECR1 domain.

The protein is Protein PYRAB00100 of Pyrococcus abyssi (strain GE5 / Orsay).